The following is a 285-amino-acid chain: Bifunctional protein FolD (285 aa).

Residues 166-168 (GAS) and I232 contribute to the NADP(+) site.

The protein belongs to the tetrahydrofolate dehydrogenase/cyclohydrolase family. Homodimer.

It carries out the reaction (6R)-5,10-methylene-5,6,7,8-tetrahydrofolate + NADP(+) = (6R)-5,10-methenyltetrahydrofolate + NADPH. The enzyme catalyses (6R)-5,10-methenyltetrahydrofolate + H2O = (6R)-10-formyltetrahydrofolate + H(+). It functions in the pathway one-carbon metabolism; tetrahydrofolate interconversion. With respect to regulation, the NAD(+)-dependent dehydrogenase is activated by inorganic phosphate. Its function is as follows. Catalyzes the oxidation of 5,10-methylenetetrahydrofolate to 5,10-methenyltetrahydrofolate and then the hydrolysis of 5,10-methenyltetrahydrofolate to 10-formyltetrahydrofolate. The polypeptide is Bifunctional protein FolD (Photobacterium phosphoreum).